A 198-amino-acid chain; its full sequence is Iron-sulfur flavoprotein MJ0731 (198 aa).

Cys46, Cys49, Cys52, and Cys59 together coordinate [4Fe-4S] cluster.

It belongs to the SsuE family. Isf subfamily. In terms of assembly, homodimer. It depends on FMN as a cofactor. The cofactor is [4Fe-4S] cluster.

In terms of biological role, redox-active protein probably involved in electron transport. This Methanocaldococcus jannaschii (strain ATCC 43067 / DSM 2661 / JAL-1 / JCM 10045 / NBRC 100440) (Methanococcus jannaschii) protein is Iron-sulfur flavoprotein MJ0731.